Consider the following 240-residue polypeptide: Large ribosomal subunit protein uL1 (240 aa).

Belongs to the universal ribosomal protein uL1 family. Part of the 50S ribosomal subunit.

Functionally, binds directly to 23S rRNA. The L1 stalk is quite mobile in the ribosome, and is involved in E site tRNA release. In terms of biological role, protein L1 is also a translational repressor protein, it controls the translation of the L11 operon by binding to its mRNA. The chain is Large ribosomal subunit protein uL1 from Streptomyces griseus subsp. griseus (strain JCM 4626 / CBS 651.72 / NBRC 13350 / KCC S-0626 / ISP 5235).